Here is an 880-residue protein sequence, read N- to C-terminus: Paramyosin (880 aa).

The tract at residues 1 to 34 (MSGSLYRSPSAALYKSPSMSAFGGLPAAFGSMSV) is nonhelical region. Positions 35 to 859 (ADLGSLTRLE…LIRAKHRHQL (825 aa)) form a coiled coil. Residues 860–880 (LRAKMLQRQKFTFSKMSNRDN) form a nonhelical region region.

It belongs to the paramyosin family. Homodimer.

It localises to the cytoplasm. The protein localises to the myofibril. Functionally, paramyosin is a major structural component of many thick filaments isolated from invertebrate muscles. The chain is Paramyosin from Brugia malayi (Filarial nematode worm).